The following is a 192-amino-acid chain: MEYRSLTLDDFLSRFQLLRPQINRETLNHRQAAVLIPIVRRPQPGLLLTQRSIHLRKHAGQVAFPGGAVDDTDASAIAAALREAEEEVAIPPSAVEVIGVLPPVDSVTGYQVTPVVGIIPPDLPYRASEDEVSAVFEMPLAQALHLGRYHPLDIYRRGDSHRVWLSWYEQYFVWGMTAGIIRELALQIGVKP.

The region spanning 29 to 160 (HRQAAVLIPI…PLDIYRRGDS (132 aa)) is the Nudix hydrolase domain. A Nudix box motif is present at residues 67–89 (GAVDDTDASAIAAALREAEEEVA). Residues Glu-83 and Glu-87 each coordinate Mg(2+).

This sequence belongs to the Nudix hydrolase family. PCD1 subfamily. The cofactor is Mn(2+). It depends on Mg(2+) as a cofactor.

In terms of biological role, probably mediates the hydrolysis of some nucleoside diphosphate derivatives. This is an uncharacterized protein from Escherichia coli (strain K12).